We begin with the raw amino-acid sequence, 286 residues long: Pantothenate synthetase (286 aa).

30–37 (MGNLHAGH) is an ATP binding site. Residue His37 is the Proton donor of the active site. Gln61 provides a ligand contact to (R)-pantoate. Gln61 contributes to the beta-alanine binding site. Position 149–152 (149–152 (GEKD)) interacts with ATP. Gln155 serves as a coordination point for (R)-pantoate. ATP-binding positions include Val178 and 186–189 (MSSR).

This sequence belongs to the pantothenate synthetase family. In terms of assembly, homodimer.

It localises to the cytoplasm. It carries out the reaction (R)-pantoate + beta-alanine + ATP = (R)-pantothenate + AMP + diphosphate + H(+). Its pathway is cofactor biosynthesis; (R)-pantothenate biosynthesis; (R)-pantothenate from (R)-pantoate and beta-alanine: step 1/1. Catalyzes the condensation of pantoate with beta-alanine in an ATP-dependent reaction via a pantoyl-adenylate intermediate. The chain is Pantothenate synthetase from Methylococcus capsulatus (strain ATCC 33009 / NCIMB 11132 / Bath).